We begin with the raw amino-acid sequence, 482 residues long: Cysteine--tRNA ligase (482 aa).

Zn(2+) is bound at residue Cys29. Residues 31–41 (PTVYDSAHVGH) carry the 'HIGH' region motif. 3 residues coordinate Zn(2+): Cys210, His235, and Glu239. Residues 272–276 (KMSKS) carry the 'KMSKS' region motif. Lys275 is an ATP binding site.

This sequence belongs to the class-I aminoacyl-tRNA synthetase family. As to quaternary structure, monomer. The cofactor is Zn(2+).

The protein localises to the cytoplasm. The catalysed reaction is tRNA(Cys) + L-cysteine + ATP = L-cysteinyl-tRNA(Cys) + AMP + diphosphate. The protein is Cysteine--tRNA ligase of Anaeromyxobacter sp. (strain Fw109-5).